We begin with the raw amino-acid sequence, 311 residues long: MALPIIIDCDPGHDDAIALVLALASPELEVKAITSSAGNQTPEKTLRNVLRMLTLLKRPDIPVAGGAVKPLMRELIIADNVHGESGLNGPALPEPSFAPQSGTAVELMAKTLRESAQPVTIVSTGPQTNVALLLNSHPELHTKIARIVIMGGAMALGNWTPAAEFNIYVDPEAAEIVFQSGIPVVMAGLDVTHKAQIHAADIERFRAIGNPISTIVAELLDFFMEYHKDEKWGFVGAPLHDPCTIAWLLKPEIFTTVERWVGVETKGKYTQGMTVVDYYFLTGNKPNATVMVDVDRQGFVDLLAERLQYYA.

The active site involves histidine 240.

It belongs to the IUNH family. RihA subfamily.

In terms of biological role, hydrolyzes cytidine or uridine to ribose and cytosine or uracil, respectively. The protein is Pyrimidine-specific ribonucleoside hydrolase RihA of Salmonella enteritidis PT4 (strain P125109).